A 632-amino-acid polypeptide reads, in one-letter code: 1-deoxy-D-xylulose-5-phosphate synthase (632 aa).

Thiamine diphosphate contacts are provided by residues histidine 79 and 120 to 122; that span reads GHA. Mg(2+) is bound at residue aspartate 152. Thiamine diphosphate is bound by residues 153–154, asparagine 181, phenylalanine 293, and glutamate 377; that span reads GS. Residue asparagine 181 coordinates Mg(2+).

It belongs to the transketolase family. DXPS subfamily. In terms of assembly, homodimer. Requires Mg(2+) as cofactor. Thiamine diphosphate is required as a cofactor.

The catalysed reaction is D-glyceraldehyde 3-phosphate + pyruvate + H(+) = 1-deoxy-D-xylulose 5-phosphate + CO2. It participates in metabolic intermediate biosynthesis; 1-deoxy-D-xylulose 5-phosphate biosynthesis; 1-deoxy-D-xylulose 5-phosphate from D-glyceraldehyde 3-phosphate and pyruvate: step 1/1. Functionally, catalyzes the acyloin condensation reaction between C atoms 2 and 3 of pyruvate and glyceraldehyde 3-phosphate to yield 1-deoxy-D-xylulose-5-phosphate (DXP). This Phocaeicola vulgatus (strain ATCC 8482 / DSM 1447 / JCM 5826 / CCUG 4940 / NBRC 14291 / NCTC 11154) (Bacteroides vulgatus) protein is 1-deoxy-D-xylulose-5-phosphate synthase.